Reading from the N-terminus, the 173-residue chain is NADH-quinone oxidoreductase subunit I 1 (173 aa).

4Fe-4S ferredoxin-type domains are found at residues 41–73 (IVLT…LAKA) and 83–112 (EHFR…LTPD). 8 residues coordinate [4Fe-4S] cluster: Cys-53, Cys-56, Cys-59, Cys-63, Cys-92, Cys-95, Cys-98, and Cys-102.

It belongs to the complex I 23 kDa subunit family. In terms of assembly, NDH-1 is composed of 14 different subunits. Subunits NuoA, H, J, K, L, M, N constitute the membrane sector of the complex. The cofactor is [4Fe-4S] cluster.

The protein resides in the cell inner membrane. It catalyses the reaction a quinone + NADH + 5 H(+)(in) = a quinol + NAD(+) + 4 H(+)(out). NDH-1 shuttles electrons from NADH, via FMN and iron-sulfur (Fe-S) centers, to quinones in the respiratory chain. The immediate electron acceptor for the enzyme in this species is believed to be ubiquinone. Couples the redox reaction to proton translocation (for every two electrons transferred, four hydrogen ions are translocated across the cytoplasmic membrane), and thus conserves the redox energy in a proton gradient. This is NADH-quinone oxidoreductase subunit I 1 from Rhodopseudomonas palustris (strain BisA53).